Here is a 301-residue protein sequence, read N- to C-terminus: HTH-type transcriptional activator NagR (301 aa).

The region spanning 6–63 (IDLNLLVVFNQLLLDRSVSTAGEKLGLTQPAVSNSLKRLRAALKDDLFLRTSKGMEPT) is the HTH lysR-type domain. The segment at residues 23–42 (VSTAGEKLGLTQPAVSNSLK) is a DNA-binding region (H-T-H motif).

It belongs to the LysR transcriptional regulatory family.

Its function is as follows. May regulate the expression of the naphthalene (nagA-F) and salicylate (nagG-M) metabolism genes. This Ralstonia sp protein is HTH-type transcriptional activator NagR.